A 934-amino-acid chain; its full sequence is Rab GTPase-activating protein tbc-11 (934 aa).

The PID domain occupies 16-134; the sequence is VQYLGCSQLV…SKAETAAKAL (119 aa). Residues 337-383 form a disordered region; sequence FISLESDSDRKRSKQNLGKSPSRMPTQLLHPTGDDESDCDEPLLSGS. Positions 351–361 are enriched in polar residues; that stretch reads QNLGKSPSRMP. The region spanning 422 to 612 is the Rab-GAP TBC domain; sequence GIPDKLRGRV…FILDLFLSQG (191 aa). Coiled-coil stretches lie at residues 727–800 and 861–895; these read KIEL…YKKL and LEER…LTHQ.

Its function is as follows. Rab GTPase activating protein for the small GTPases rab-6.1 and rab-6.2. Probably acts through rab-6.1 and rab-6.2 to play a role in microRNA-mediated gene silencing in different tissue types. Required for seam cell division and alae formation. This is Rab GTPase-activating protein tbc-11 from Caenorhabditis elegans.